We begin with the raw amino-acid sequence, 630 residues long: Multidrug transporter TPO3 (630 aa).

Residues 1 to 35 show a composition bias toward polar residues; it reads MVDQESLVSFSSETSQSINSDIDIESQQQPRQYIP. 2 disordered regions span residues 1–46 and 107–157; these read MVDQ…KERL and TSTA…NQQP. Basic and acidic residues predominate over residues 37-46; the sequence is NEKDGNKERL. The segment covering 125–137 has biased composition (low complexity); it reads RRSQNIAASSNSS. Residue asparagine 135 is glycosylated (N-linked (GlcNAc...) asparagine). A run of 12 helical transmembrane segments spans residues 190–210, 222–242, 252–272, 282–302, 312–332, 342–362, 423–443, 453–473, 494–514, 519–539, 553–575, and 587–607; these read ILSC…GGLF, AAIL…LIWS, LAYF…ALSP, FLCG…IADM, IAFF…VNGF, LIFW…AFIP, FYVC…PVVF, LIGL…ATTF, LFGA…LGAT, IIWV…VLIY, YASS…FPLF, and WASW…FGFY.

The protein belongs to the major facilitator superfamily. DHA1 family. Polyamines/proton antiporter (TC 2.A.1.2.16) subfamily.

Its subcellular location is the cell membrane. Functionally, cell membrane polyamine/proton antiporter, involved in the detoxification of excess polyamines in the cytoplasm. Involved in the resistance to the imidazole antifungal drugs tioconazole, miconazole, clotrimazole and ketoconazole; to the triazole fluconazole; but not to the antifungals flucytosine or amphotericin B. Plays a role in spermine homeostasis, but spermine accumulation in response to clotrimazole is independent of TPO3. In Candida glabrata (strain ATCC 2001 / BCRC 20586 / JCM 3761 / NBRC 0622 / NRRL Y-65 / CBS 138) (Yeast), this protein is Multidrug transporter TPO3.